The primary structure comprises 505 residues: Circadian clock protein KaiC3 (505 aa).

2 KaiC domains span residues 10-252 and 253-485; these read EKLE…KSSD and IRIT…LAGT. Residue Ser423 is modified to Phosphoserine; by autocatalysis. Thr424 bears the Phosphothreonine; by autocatalysis mark.

It belongs to the KaiC family. Multimerizes, probably forming homohexamers, no interaction with KaiC1 or KaiC2 is seen. In another study forms hexamers, interacts with KaiB1, KaiB3, and KaiC1. In terms of processing, autophosphorylates and dephosphorylates. Dephosphorylation of KaiC3 was higher at 25 than at 30 or 35 degrees Celsius.

The catalysed reaction is L-seryl-[protein] + ATP = O-phospho-L-seryl-[protein] + ADP + H(+). The enzyme catalyses L-threonyl-[protein] + ATP = O-phospho-L-threonyl-[protein] + ADP + H(+). It carries out the reaction ATP + H2O = ADP + phosphate + H(+). With respect to regulation, ATPase activity is influenced by KaiB1 and KaiB3 in vitro; ATPase is reduced 35% by the KaiB1 tetramer and 55% by the KaiB3 monomer but not affected by KaiA or the KaiB3 tetramer. Seems to be linked to dark adaption of Synechocystis cells, but is not as essential as the core oscillator KaiAB1C1 for the circadian cycle. KaiB3 and KaiC3 may cross talk with the core oscillator. Autophosphorylates and dephosphorylates independently of KaiA. Has a weak ATPase, hydrolyzes 8.5 ATP/monomer/day, has no detectable ATP synthesis activity. ATPase activity reduced 55% by KaiB3 monomer but not the KaiB3 tetramer or KaiA in vitro, reduced 35% by KaiB1 tetramer. This Synechocystis sp. (strain ATCC 27184 / PCC 6803 / Kazusa) protein is Circadian clock protein KaiC3.